The sequence spans 380 residues: PqqA peptide cyclase (380 aa).

The 217-residue stretch at F12–R228 folds into the Radical SAM core domain. C26, C30, and C33 together coordinate [4Fe-4S] cluster.

This sequence belongs to the radical SAM superfamily. PqqE family. Interacts with PqqD. The interaction is necessary for activity of PqqE. [4Fe-4S] cluster serves as cofactor.

The catalysed reaction is [PQQ precursor protein] + S-adenosyl-L-methionine = E-Y cross-linked-[PQQ precursor protein] + 5'-deoxyadenosine + L-methionine + H(+). The protein operates within cofactor biosynthesis; pyrroloquinoline quinone biosynthesis. Functionally, catalyzes the cross-linking of a glutamate residue and a tyrosine residue in the PqqA protein as part of the biosynthesis of pyrroloquinoline quinone (PQQ). In Bradyrhizobium diazoefficiens (strain JCM 10833 / BCRC 13528 / IAM 13628 / NBRC 14792 / USDA 110), this protein is PqqA peptide cyclase.